A 258-amino-acid chain; its full sequence is Phosphonates import ATP-binding protein PhnC 3 (258 aa).

One can recognise an ABC transporter domain in the interval 2 to 246; that stretch reads IEFKNVSLVY…TFEEIYGRKI (245 aa). Position 35-42 (35-42) interacts with ATP; it reads GLSGAGKS.

The protein belongs to the ABC transporter superfamily. Phosphonates importer (TC 3.A.1.9.1) family. As to quaternary structure, the complex is composed of two ATP-binding proteins (PhnC), two transmembrane proteins (PhnE) and a solute-binding protein (PhnD).

The protein resides in the cell membrane. It carries out the reaction phosphonate(out) + ATP + H2O = phosphonate(in) + ADP + phosphate + H(+). In terms of biological role, part of the ABC transporter complex PhnCDE involved in phosphonates import. Responsible for energy coupling to the transport system. This chain is Phosphonates import ATP-binding protein PhnC 3, found in Halalkalibacterium halodurans (strain ATCC BAA-125 / DSM 18197 / FERM 7344 / JCM 9153 / C-125) (Bacillus halodurans).